The following is a 103-amino-acid chain: Small ribosomal subunit protein uS10 (103 aa).

This sequence belongs to the universal ribosomal protein uS10 family. Part of the 30S ribosomal subunit.

Functionally, involved in the binding of tRNA to the ribosomes. The protein is Small ribosomal subunit protein uS10 of Leptothrix cholodnii (strain ATCC 51168 / LMG 8142 / SP-6) (Leptothrix discophora (strain SP-6)).